Reading from the N-terminus, the 375-residue chain is Acetylornithine aminotransferase (375 aa).

Residues 102 to 103 (GA) and Phe129 contribute to the pyridoxal 5'-phosphate site. Arg132 serves as a coordination point for N(2)-acetyl-L-ornithine. Pyridoxal 5'-phosphate is bound at residue 214 to 217 (DEVQ). Position 243 is an N6-(pyridoxal phosphate)lysine (Lys243). Ser271 provides a ligand contact to N(2)-acetyl-L-ornithine. Thr272 provides a ligand contact to pyridoxal 5'-phosphate.

This sequence belongs to the class-III pyridoxal-phosphate-dependent aminotransferase family. ArgD subfamily. As to quaternary structure, homodimer. The cofactor is pyridoxal 5'-phosphate.

It localises to the cytoplasm. The enzyme catalyses N(2)-acetyl-L-ornithine + 2-oxoglutarate = N-acetyl-L-glutamate 5-semialdehyde + L-glutamate. The protein operates within amino-acid biosynthesis; L-arginine biosynthesis; N(2)-acetyl-L-ornithine from L-glutamate: step 4/4. In Archaeoglobus fulgidus (strain ATCC 49558 / DSM 4304 / JCM 9628 / NBRC 100126 / VC-16), this protein is Acetylornithine aminotransferase.